We begin with the raw amino-acid sequence, 421 residues long: Testin (421 aa).

Residues Met-92 to Asp-199 enclose the PET domain. A disordered region spans residues Gln-135–His-165. A compositionally biased stretch (basic and acidic residues) spans Leu-154–His-165. 3 LIM zinc-binding domains span residues Tyr-234–Glu-297, Pro-299–Val-359, and Gln-362–Ser-421.

This sequence belongs to the prickle / espinas / testin family. In terms of assembly, interacts via LIM domain 1 with ZYX. Interacts (via LIM domain 3) with ENAH and VASP. Interacts with ALKBH4, talin, actin, alpha-actinin, GRIP1 and PXN. Interacts (via LIM domain 2) with ACTL7A (via N-terminus). Heterodimer with ACTL7A; the heterodimer interacts with ENAH to form a heterotrimer.

The protein localises to the cytoplasm. Its subcellular location is the cell junction. The protein resides in the focal adhesion. In terms of biological role, scaffold protein that may play a role in cell adhesion, cell spreading and in the reorganization of the actin cytoskeleton. Plays a role in the regulation of cell proliferation. May act as a tumor suppressor. The polypeptide is Testin (TES) (Dasypus novemcinctus (Nine-banded armadillo)).